Consider the following 125-residue polypeptide: Small ribosomal subunit protein uS12 (125 aa).

Aspartate 89 carries the 3-methylthioaspartic acid modification. The disordered stretch occupies residues 100-125; the sequence is GSLDTQGVKDRKQSRSKYGAKRPKAA. Positions 113–125 are enriched in basic residues; it reads SRSKYGAKRPKAA.

It belongs to the universal ribosomal protein uS12 family. Part of the 30S ribosomal subunit. Contacts proteins S8 and S17. May interact with IF1 in the 30S initiation complex.

Its function is as follows. With S4 and S5 plays an important role in translational accuracy. Functionally, interacts with and stabilizes bases of the 16S rRNA that are involved in tRNA selection in the A site and with the mRNA backbone. Located at the interface of the 30S and 50S subunits, it traverses the body of the 30S subunit contacting proteins on the other side and probably holding the rRNA structure together. The combined cluster of proteins S8, S12 and S17 appears to hold together the shoulder and platform of the 30S subunit. This is Small ribosomal subunit protein uS12 from Dechloromonas aromatica (strain RCB).